Reading from the N-terminus, the 252-residue chain is Delta-like protein dsl-1 (252 aa).

The signal sequence occupies residues 1–17 (MLKYLIFLAILISVVHS). The 45-residue stretch at 120–164 (IKCNRYWHGLHCDHFCNDDFARTINRRCTQNGTLGCLEGFHGPNC) folds into the DSL domain. 6 disulfides stabilise this stretch: Cys-122–Cys-131, Cys-135–Cys-147, Cys-155–Cys-164, Cys-173–Cys-181, Cys-175–Cys-197, and Cys-199–Cys-209. Residues 169–210 (PADSCKCQNGGKCVSSLENTWAQNGSLICECRLGHFEGKHCE) enclose the EGF-like domain.

As to quaternary structure, may interact with lin-12/Notch receptor.

It is found in the secreted. Functionally, probable secreted Notch ligand involved in the mediation of Notch signaling. Involved in the lin-12/Notch pathway-mediated signaling of cell fate in vulval precursor cells (VPCs), acting redundantly with lag-2, apx-1 and osm-11. May also be involved in glp-1/Notch signaling. This is Delta-like protein dsl-1 from Caenorhabditis elegans.